A 485-amino-acid chain; its full sequence is Rhamnulokinase (485 aa).

10-14 (ASSGR) is an ATP binding site. Residues Ala78 and 233 to 235 (HDT) contribute to the substrate site. Asp234 (proton acceptor) is an active-site residue. Position 256 (Thr256) interacts with ATP. Asn293 is a substrate binding site. Gln301 provides a ligand contact to ATP. A disulfide bond links Cys351 and Cys368. ATP is bound at residue Gly400.

The protein belongs to the rhamnulokinase family. It depends on Mg(2+) as a cofactor.

The enzyme catalyses L-rhamnulose + ATP = L-rhamnulose 1-phosphate + ADP + H(+). It functions in the pathway carbohydrate degradation; L-rhamnose degradation; glycerone phosphate from L-rhamnose: step 2/3. Functionally, involved in the catabolism of L-rhamnose (6-deoxy-L-mannose). Catalyzes the transfer of the gamma-phosphate group from ATP to the 1-hydroxyl group of L-rhamnulose to yield L-rhamnulose 1-phosphate. The polypeptide is Rhamnulokinase (Bacillus subtilis (strain 168)).